A 207-amino-acid polypeptide reads, in one-letter code: Vascular endothelial growth factor B (207 aa).

The signal sequence occupies residues 1–21; sequence MSPLLRRLLLAVLLQLAPAQA. Disulfide bonds link cysteine 47–cysteine 89, cysteine 78–cysteine 122, and cysteine 82–cysteine 124. A compositionally biased stretch (basic and acidic residues) spans 124–139; the sequence is CRPKKRESAVKPDRAS. Residues 124-207 form a disordered region; sequence CRPKKRESAV…AASSVVKGGA (84 aa). The span at 174–201 shows a compositional bias: low complexity; the sequence is PSAHAAPSAASALTPGPATAAADAAASS.

Belongs to the PDGF/VEGF growth factor family. As to quaternary structure, homodimer; disulfide-linked. Can also form heterodimer with VEGF. Post-translationally, VEGF-B186 is O-glycosylated.

Its subcellular location is the secreted. Functionally, growth factor for endothelial cells. VEGF-B167 binds heparin and neuropilin-1 whereas the binding to neuropilin-1 of VEGF-B186 is regulated by proteolysis. This Bos taurus (Bovine) protein is Vascular endothelial growth factor B (VEGFB).